The sequence spans 317 residues: Actin-related protein 2/3 complex subunit 2 (317 aa).

The protein belongs to the ARPC2 family. In terms of assembly, component of the Arp2/3 complex composed of arp2, act2, arc1/p41-ARC, arc2/p34-ARC, arc3/p21-ARC, arc4/p20-ARC and arc5/p16-ARC.

Its subcellular location is the cytoplasm. The protein localises to the cytoskeleton. It is found in the actin patch. Functions as actin-binding component of the Arp2/3 complex which is involved in regulation of actin polymerization and together with an activating nucleation-promoting factor (NPF) mediates the formation of branched actin networks. Seems to contact the mother actin filament. In Schizosaccharomyces pombe (strain 972 / ATCC 24843) (Fission yeast), this protein is Actin-related protein 2/3 complex subunit 2 (arc2).